The chain runs to 194 residues: NADH-quinone oxidoreductase subunit B 1 (194 aa).

Over residues 1–12 the composition is skewed to polar residues; sequence MGVTPVSNQPLV. Residues 1 to 23 form a disordered region; sequence MGVTPVSNQPLVAQQPKGIIDPS. [4Fe-4S] cluster-binding residues include C73, C74, C138, and C168.

This sequence belongs to the complex I 20 kDa subunit family. In terms of assembly, NDH-1 is composed of 14 different subunits. Subunits NuoB, C, D, E, F, and G constitute the peripheral sector of the complex. The cofactor is [4Fe-4S] cluster.

Its subcellular location is the cell inner membrane. The catalysed reaction is a quinone + NADH + 5 H(+)(in) = a quinol + NAD(+) + 4 H(+)(out). Its function is as follows. NDH-1 shuttles electrons from NADH, via FMN and iron-sulfur (Fe-S) centers, to quinones in the respiratory chain. The immediate electron acceptor for the enzyme in this species is believed to be ubiquinone. Couples the redox reaction to proton translocation (for every two electrons transferred, four hydrogen ions are translocated across the cytoplasmic membrane), and thus conserves the redox energy in a proton gradient. This Rhizobium etli (strain ATCC 51251 / DSM 11541 / JCM 21823 / NBRC 15573 / CFN 42) protein is NADH-quinone oxidoreductase subunit B 1.